Here is a 65-residue protein sequence, read N- to C-terminus: Large ribosomal subunit protein bL35 (65 aa).

Basic residues predominate over residues 1–45 (MPKMKSHSGAKKRFKKTGNGKIKRKKANKGHLLTKKNAKRKRQLR). Residues 1–65 (MPKMKSHSGA…RDRIKRMLST (65 aa)) form a disordered region. The segment covering 48–57 (VVVDDKANRD) has biased composition (basic and acidic residues).

This sequence belongs to the bacterial ribosomal protein bL35 family.

This Salinibacter ruber (strain DSM 13855 / M31) protein is Large ribosomal subunit protein bL35.